Reading from the N-terminus, the 537-residue chain is Synaptotagmin-C (537 aa).

Topologically, residues 1–52 (MSGDGEDELCRNALALVNELCFSVRGNHNNEKCIEFSYLLRDRDRTRHIETD) are vesicular. The helical transmembrane segment at 53–78 (ISVSLLSVIVTFCGIVLLGVSLFVSW) threads the bilayer. Over 79–537 (KLCWIPWRDK…TIVVESPHSV (459 aa)) the chain is Cytoplasmic. 2 disordered regions span residues 92-111 (PQRR…HHSH) and 142-200 (IKLS…EFGT). The span at 100-110 (HPHQHLHHHHS) shows a compositional bias: basic residues. Positions 143-174 (KLSQTSPDIPVDTSSGSKENNIPNAHSQQQVS) are enriched in polar residues. Residues 228–477 (EAKKHQKVNC…VIGMCRVGNA (250 aa)) form a phospholipid binding region. C2 domains are found at residues 236-357 (NCGR…TIWR) and 368-501 (DLGE…EQWH). Residues D267, D273, D325, F326, D327, S330, D333, D399, D405, D459, and D461 each coordinate Ca(2+).

Belongs to the synaptotagmin family. In terms of assembly, homodimer or homotrimer (possible). Ca(2+) serves as cofactor.

The protein localises to the cytoplasmic vesicle. It localises to the secretory vesicle. The protein resides in the synaptic vesicle membrane. Its subcellular location is the synapse. Its function is as follows. May have a regulatory role in the membrane interactions during trafficking of synaptic vesicles at the active zone of the synapse. It binds acidic phospholipids with a specificity that requires the presence of both an acidic head group and a diacyl backbone. In Diplobatis ommata (Ocellated electric ray), this protein is Synaptotagmin-C (P65-C).